Here is a 582-residue protein sequence, read N- to C-terminus: Protein alan shepard (582 aa).

A compositionally biased stretch (pro residues) spans 1 to 12 (MHPRYSPAPPPQ). The tract at residues 1 to 73 (MHPRYSPAPP…AAPPTSRSAF (73 aa)) is disordered. Tyrosine 5 carries the phosphotyrosine modification. Residues 13 to 24 (QQQQMGGPLHQQ) are compositionally biased toward low complexity. Gly residues predominate over residues 25 to 36 (QGGGGGGGGGIR). Over residues 39–57 (SNAQQLPPQIPRSQNYSNG) the composition is skewed to polar residues. The span at 58-72 (SSSSAAAAPPTSRSA) shows a compositional bias: low complexity. Phosphotyrosine occurs at positions 125 and 142. A disordered region spans residues 164–225 (PATTTYGQRV…TVQNQNQQGG (62 aa)). Positions 178–225 (SPSNTNSSSSSNTGSQSGTLSTSLSNTTNTNTNMGPNGTVQNQNQQGG) are enriched in low complexity. 2 RRM domains span residues 231-304 (TNLY…MAKQ) and 310-389 (TNLY…FADG). Residues 555–582 (PMTDSEQASTAASPDEAYTQYPHQAAPK) are disordered.

Has a role in the perception of gravity. The sequence is that of Protein alan shepard from Drosophila yakuba (Fruit fly).